The sequence spans 609 residues: RAS guanyl-releasing protein 2 (609 aa).

Residue Ala2 is the site of N-myristoyl glycine attachment. Residues 4 to 126 enclose the N-terminal Ras-GEF domain; the sequence is TLDLDKGCTV…SLIDIDSVPT (123 aa). Residue Leu7 is the site of S-palmitoyl cysteine attachment. 3 positions are modified to phosphoserine: Ser116, Ser117, and Ser147. In terms of domain architecture, Ras-GEF spans 154–387; the sequence is EPMELAEHLT…YQLSLQREPR (234 aa). A disordered region spans residues 382-406; it reads LQREPRSKSSPTSPTSCTPPPRPPV. EF-hand domains are found at residues 426–461 and 455–490; these read HIEKMVESVFRNFDVDGDGHISQEEFQIIRGNFPYL and RGNFPYLSAFGDLDQNQDGCISREEMVSYFLRSSSV. 10 residues coordinate Ca(2+): Asp439, Asp441, Asp443, His445, Glu450, Asp468, Asn470, Asp472, Cys474, and Glu479. The Phorbol-ester/DAG-type zinc finger occupies 498–548; sequence VHNFQESNSLRPVACRHCKALILGIYKQGLKCRACGVNCHKQCKDRLSVEC. A phosphoserine mark is found at Ser554 and Ser576. The segment at 557 to 592 is disordered; the sequence is LEGSAPSPSPMHSHHHRAFSFSLPRPGRRGSRPPEI.

Belongs to the RASGRP family. In terms of assembly, forms a signaling complex with RAP1 and BRAF. Interacts with RAP1. Interacts with F-actin. Isoform 2 is palmitoylated and myristoylated. In terms of tissue distribution, detected in platelets, neutrophils and T lymphocytes (at protein level). Expressed in brain where it is enriched in the striatum. Also expressed in the hematopoietic system. Detected in heart, brain, lung, placenta, liver, skeletal muscle and kidney.

It is found in the cytoplasm. Its subcellular location is the cytosol. The protein resides in the cell membrane. It localises to the synapse. The protein localises to the synaptosome. It is found in the cell projection. Its subcellular location is the ruffle membrane. With respect to regulation, isoform 1 and isoform 2 are differently regulated by calcium and DAG. Functionally, functions as a calcium- and DAG-regulated nucleotide exchange factor specifically activating Rap through the exchange of bound GDP for GTP. May also activate other GTPases such as RRAS, RRAS2, NRAS, KRAS but not HRAS. Functions in aggregation of platelets and adhesion of T-lymphocytes and neutrophils probably through inside-out integrin activation. May function in the muscarinic acetylcholine receptor M1/CHRM1 signaling pathway. This chain is RAS guanyl-releasing protein 2 (RASGRP2), found in Homo sapiens (Human).